The chain runs to 51 residues: GDIIDVDNDLFEHEQDGVAGTSVHGEYEAYDAYGNEYEVKYIADHLGFRVL.

In terms of domain architecture, Chitin-binding type R&amp;R spans 1 to 51 (GDIIDVDNDLFEHEQDGVAGTSVHGEYEAYDAYGNEYEVKYIADHLGFRVL).

Calcified shell.

This is Cuticle protein CP575 from Cancer pagurus (Rock crab).